The sequence spans 360 residues: Peptide chain release factor 1 (360 aa).

Position 237 is an N5-methylglutamine (Q237).

The protein belongs to the prokaryotic/mitochondrial release factor family. In terms of processing, methylated by PrmC. Methylation increases the termination efficiency of RF1.

It is found in the cytoplasm. Peptide chain release factor 1 directs the termination of translation in response to the peptide chain termination codons UAG and UAA. This Pseudomonas aeruginosa (strain ATCC 15692 / DSM 22644 / CIP 104116 / JCM 14847 / LMG 12228 / 1C / PRS 101 / PAO1) protein is Peptide chain release factor 1 (prfA).